Reading from the N-terminus, the 291-residue chain is 33 kDa chaperonin (291 aa).

Intrachain disulfides connect cysteine 235-cysteine 237 and cysteine 268-cysteine 271.

It belongs to the HSP33 family. In terms of processing, under oxidizing conditions two disulfide bonds are formed involving the reactive cysteines. Under reducing conditions zinc is bound to the reactive cysteines and the protein is inactive.

The protein resides in the cytoplasm. In terms of biological role, redox regulated molecular chaperone. Protects both thermally unfolding and oxidatively damaged proteins from irreversible aggregation. Plays an important role in the bacterial defense system toward oxidative stress. The polypeptide is 33 kDa chaperonin (Streptococcus agalactiae serotype III (strain NEM316)).